The primary structure comprises 247 residues: Dynein axonemal assembly factor 19 (247 aa).

Positions 12-32 (LEKELHSALQADRKYQRENDA) form a coiled coil.

The protein belongs to the DNAAF19/PR46b family. Homodimer. As to expression, expressed in all cells bearing motile cilia.

The protein resides in the cytoplasm. The protein localises to the cell projection. Its subcellular location is the cilium. It localises to the flagellum. Dynein-attachment factor required for cilia motility. In Danio rerio (Zebrafish), this protein is Dynein axonemal assembly factor 19 (dnaaf19).